A 149-amino-acid polypeptide reads, in one-letter code: Small ribosomal subunit protein eS19 (149 aa).

This sequence belongs to the eukaryotic ribosomal protein eS19 family.

The chain is Small ribosomal subunit protein eS19 (RPS19) from Mya arenaria (Soft-shell clam).